The following is a 68-amino-acid chain: Neuronal regeneration-related protein (68 aa).

In terms of assembly, interacts with FLNA. Interacts with the latency-associated peptides (LAP) of TGFB1 and TGFB2; the interaction results in a decrease in TGFB autoinduction. Post-translationally, phosphorylated on Ser-59. Phosphorylation decreases stability and activity.

It is found in the cytoplasm. Functionally, may have roles in neural function. Ectopic expression promotes axonal regeneration. Also augments motility of gliomas. May also have roles in cellular differentiation. Induces differentiation of fibroblast into myofibroblast and myofibroblast ameboid migration. Increases retinoic-acid regulation of lipid-droplet biogenesis. Down-regulates the expression of TGFB1 and TGFB2 but not of TGFB3. May play a role in the regulation of alveolar generation. This chain is Neuronal regeneration-related protein (Nrep), found in Rattus norvegicus (Rat).